The sequence spans 470 residues: UDP-N-acetylmuramoylalanine--D-glutamate ligase (470 aa).

124 to 130 (GTNGKTT) provides a ligand contact to ATP.

Belongs to the MurCDEF family.

Its subcellular location is the cytoplasm. The enzyme catalyses UDP-N-acetyl-alpha-D-muramoyl-L-alanine + D-glutamate + ATP = UDP-N-acetyl-alpha-D-muramoyl-L-alanyl-D-glutamate + ADP + phosphate + H(+). Its pathway is cell wall biogenesis; peptidoglycan biosynthesis. Its function is as follows. Cell wall formation. Catalyzes the addition of glutamate to the nucleotide precursor UDP-N-acetylmuramoyl-L-alanine (UMA). In Prochlorococcus marinus (strain SARG / CCMP1375 / SS120), this protein is UDP-N-acetylmuramoylalanine--D-glutamate ligase.